A 176-amino-acid chain; its full sequence is 2-oxo-4-hydroxy-4-carboxy-5-ureidoimidazoline decarboxylase (176 aa).

The active-site Proton donor; for OHCU decarboxylase activity is H70. Substrate-binding positions include P71, 83–87, and 118–122; these read SQEEQ and FIMAV. Positions 72–96 are disordered; the sequence is DLGERTEMTDESQEEQASAGLDRLP.

Belongs to the OHCU decarboxylase family.

The catalysed reaction is 5-hydroxy-2-oxo-4-ureido-2,5-dihydro-1H-imidazole-5-carboxylate + H(+) = (S)-allantoin + CO2. Its pathway is purine metabolism; urate degradation; (S)-allantoin from urate: step 3/3. Catalyzes the stereoselective decarboxylation of 2-oxo-4-hydroxy-4-carboxy-5-ureidoimidazoline (OHCU) to (S)-allantoin. This is 2-oxo-4-hydroxy-4-carboxy-5-ureidoimidazoline decarboxylase from Halalkalicoccus jeotgali (strain DSM 18796 / CECT 7217 / JCM 14584 / KCTC 4019 / B3).